A 31-amino-acid polypeptide reads, in one-letter code: Cytochrome b6-f complex subunit 6 (31 aa).

A helical membrane pass occupies residues 4 to 24 (IISYFGFLFGALTLALILFIG).

The protein belongs to the PetL family. The 4 large subunits of the cytochrome b6-f complex are cytochrome b6, subunit IV (17 kDa polypeptide, PetD), cytochrome f and the Rieske protein, while the 4 small subunits are PetG, PetL, PetM and PetN. The complex functions as a dimer.

Its subcellular location is the plastid. It is found in the chloroplast thylakoid membrane. Component of the cytochrome b6-f complex, which mediates electron transfer between photosystem II (PSII) and photosystem I (PSI), cyclic electron flow around PSI, and state transitions. PetL is important for photoautotrophic growth as well as for electron transfer efficiency and stability of the cytochrome b6-f complex. The protein is Cytochrome b6-f complex subunit 6 of Physcomitrium patens (Spreading-leaved earth moss).